The following is a 324-amino-acid chain: Malate dehydrogenase (324 aa).

NAD(+) contacts are provided by residues 7-13 (GAAGGIG) and Asp-34. Substrate-binding residues include Arg-88 and Arg-94. NAD(+) contacts are provided by residues Asn-101 and 124–126 (VTN). Positions 126 and 160 each coordinate substrate. His-184 (proton acceptor) is an active-site residue. Met-238 serves as a coordination point for NAD(+).

This sequence belongs to the LDH/MDH superfamily. MDH type 1 family. As to quaternary structure, homodimer.

It catalyses the reaction (S)-malate + NAD(+) = oxaloacetate + NADH + H(+). In terms of biological role, catalyzes the reversible oxidation of malate to oxaloacetate. The sequence is that of Malate dehydrogenase from Haemophilus ducreyi (strain 35000HP / ATCC 700724).